The primary structure comprises 358 residues: RuBisCO accumulation factor 1 (358 aa).

Residues 11–194 (VSAAEAAELI…RQAIEKLLTD (184 aa)) form an N-terminal alpha-helix region. A C-terminal beta-sheet region spans residues 218–344 (ARLIPVAGTF…VVLVLRPKKI (127 aa)).

This sequence belongs to the RAF family. In terms of assembly, homodimer. Forms an RbcL(8)-Raf1(8) complex. Forms complexes of many stoichiometries with RbcL with and without RbcS. RbcX and Raf1 can bind simultaneously to RbcL. Interacts with both RuBisCO subunits (ccbL, ccbS), GroEL, DnaK and alpha and beta phycocyanin (cpcA, cpcB) in pull-down experiments with tagged protein. C-terminally tagged Raf1 does not interact with either RuBisCO subunit, suggesting its C-terminus is involved in binding.

Its subcellular location is the cytoplasm. Functionally, a major RuBisCO chaperone. Acts after GroEL-GroES chaperonin to fold and/or assemble the large subunit of RuBisCO (ccbL, rbcL). Cooperates with RbcX in RbcL folding, plays the major role in assembly of dimers into RbcL(8)-Raf1(8) intermediate complexes. RbcS replaces Raf1, leading to holoenzyme formation. Required for optimal reconstitution of RbcL(8) upon expression in E.coli. Has been suggested to be involved in RuBisCO recycling and homeostasis rather than assembly. The polypeptide is RuBisCO accumulation factor 1 (Synechocystis sp. (strain ATCC 27184 / PCC 6803 / Kazusa)).